Reading from the N-terminus, the 329-residue chain is GTP 3',8-cyclase (329 aa).

The 227-residue stretch at 8–234 (AFARKFYYLR…QLRQRSDGPA (227 aa)) folds into the Radical SAM core domain. Arg17 provides a ligand contact to GTP. [4Fe-4S] cluster is bound by residues Cys24 and Cys28. S-adenosyl-L-methionine is bound at residue Tyr30. Cys31 is a [4Fe-4S] cluster binding site. Arg68 serves as a coordination point for GTP. Gly72 lines the S-adenosyl-L-methionine pocket. A GTP-binding site is contributed by Thr99. Residue Ser123 participates in S-adenosyl-L-methionine binding. Residue Lys160 coordinates GTP. Residue Met194 participates in S-adenosyl-L-methionine binding. Residues Cys257 and Cys260 each coordinate [4Fe-4S] cluster. 262-264 (RLR) serves as a coordination point for GTP. Cys274 contacts [4Fe-4S] cluster.

Belongs to the radical SAM superfamily. MoaA family. Monomer and homodimer. [4Fe-4S] cluster is required as a cofactor.

It carries out the reaction GTP + AH2 + S-adenosyl-L-methionine = (8S)-3',8-cyclo-7,8-dihydroguanosine 5'-triphosphate + 5'-deoxyadenosine + L-methionine + A + H(+). It participates in cofactor biosynthesis; molybdopterin biosynthesis. Catalyzes the cyclization of GTP to (8S)-3',8-cyclo-7,8-dihydroguanosine 5'-triphosphate. The polypeptide is GTP 3',8-cyclase (Shigella sonnei (strain Ss046)).